A 64-amino-acid chain; its full sequence is DNA gyrase inhibitor YacG (64 aa).

4 residues coordinate Zn(2+): Cys-7, Cys-10, Cys-26, and Cys-30. The segment at 43–64 is disordered; that stretch reads KRIPGPINPDLLPYPDEGEQWQ.

It belongs to the DNA gyrase inhibitor YacG family. In terms of assembly, interacts with GyrB. Zn(2+) serves as cofactor.

Its function is as follows. Inhibits all the catalytic activities of DNA gyrase by preventing its interaction with DNA. Acts by binding directly to the C-terminal domain of GyrB, which probably disrupts DNA binding by the gyrase. The polypeptide is DNA gyrase inhibitor YacG (Aeromonas salmonicida (strain A449)).